Consider the following 989-residue polypeptide: Presequence protease, mitochondrial (989 aa).

The N-terminal 16 residues, 1 to 16 (MLRFQRFASSYAQAQA), are a transit peptide targeting the mitochondrion. Histidine 84 is a binding site for Zn(2+). Glutamate 87 serves as the catalytic Proton acceptor. Histidine 88 contributes to the Zn(2+) binding site. Residue glutamate 160 is part of the active site. Residue glutamate 185 participates in Zn(2+) binding. Serine 920 is subject to Phosphoserine. 972–979 (GPGIEGKT) contributes to the ATP binding site.

The protein belongs to the peptidase M16 family. PreP subfamily. In terms of assembly, monomer and homodimer; homodimerization is induced by binding of the substrate. Requires Zn(2+) as cofactor.

It is found in the mitochondrion intermembrane space. Its subcellular location is the mitochondrion matrix. Activated by nucleotides, including ATP, GTP, CTP, UTP, and ADP. Activated by copper, manganese, calcium and magnesium ions; copper and manganese restore activity following inactivation by EDTA (ethylenediaminetetraacetic acid). Inhibited by metal chelators including EDTA, EGTA (ethylene glycol bis(2-aminoethyl)tetraacetic acid), and 1,10-phenanthroline. Inhibited by copper, zinc, and iron ions. Also inhibited by dithiothreitol p-mercuribenzenesulfonic acid, N-ethylmaleimide, protoporphyrin, hemin, protamine and triarginine. Degrades mitochondrial transit peptides after their cleavage in the intermembrane space or in the matrix, and presequence peptides; clearance of these peptides is required to keep the presequence processing machinery running. Preferentially cleaves the N-terminal side of paired basic amino acid residues. Also degrades other unstructured peptides. May function as an ATP-dependent peptidase as opposed to a metalloendopeptidase. This is Presequence protease, mitochondrial from Saccharomyces cerevisiae (strain ATCC 204508 / S288c) (Baker's yeast).